We begin with the raw amino-acid sequence, 385 residues long: GTPase Obg (385 aa).

Residues 1–159 (MKFVDEVEIR…RNLKLELLLL (159 aa)) form the Obg domain. The 174-residue stretch at 160–333 (ADVGLLGLPN…LIHDVMTLLE (174 aa)) folds into the OBG-type G domain. Residues 166 to 173 (GLPNAGKS), 191 to 195 (FTTLI), 213 to 216 (DIPG), 283 to 286 (NKID), and 314 to 316 (SAI) each bind GTP. 2 residues coordinate Mg(2+): S173 and T193.

Belongs to the TRAFAC class OBG-HflX-like GTPase superfamily. OBG GTPase family. Monomer. Requires Mg(2+) as cofactor.

The protein resides in the cytoplasm. In terms of biological role, an essential GTPase which binds GTP, GDP and possibly (p)ppGpp with moderate affinity, with high nucleotide exchange rates and a fairly low GTP hydrolysis rate. Plays a role in control of the cell cycle, stress response, ribosome biogenesis and in those bacteria that undergo differentiation, in morphogenesis control. The chain is GTPase Obg from Pseudoalteromonas translucida (strain TAC 125).